The sequence spans 1580 residues: Endoribonuclease Dicer homolog 3 (1580 aa).

The span at 1-12 (MHSSLEPEKMEE) shows a compositional bias: basic and acidic residues. The tract at residues 1 to 22 (MHSSLEPEKMEEGGGSNSLKRK) is disordered. A Helicase ATP-binding domain is found at 51 to 223 (VYEVAKNRNI…SPSNYAAQVS (173 aa)). Position 64–71 (64–71 (LGTGIDKS)) interacts with ATP. The DECH box signature appears at 170 to 173 (DECH). The Helicase C-terminal domain occupies 394-562 (KLKELFHLLD…SCPPPVKNGH (169 aa)). Positions 581 to 597 (EEAASTQTMSDPPSRNE) are enriched in polar residues. Disordered regions lie at residues 581–601 (EEAA…QLPP) and 613–638 (QSNG…KKRK). The segment covering 622 to 633 (SSKSKSSSSAAG) has biased composition (low complexity). Residues 836-960 (NLIHFANASS…LPPELLARID (125 aa)) enclose the PAZ domain. 2 consecutive RNase III domains span residues 985–1157 (ASQL…VSGG) and 1198–1340 (LIEL…IDTR). Mg(2+)-binding residues include Glu1234, Asp1326, and Glu1329.

It belongs to the helicase family. Dicer subfamily. Interacts with DRB2 and DRB5. Mg(2+) is required as a cofactor. The cofactor is Mn(2+).

It localises to the nucleus. The protein localises to the nucleolus. In terms of biological role, ribonuclease (RNase) III involved in RNA-mediated post-transcriptional gene silencing (PTGS). Involved in the processing of repeat-associated small interfering RNAs (ra-siRNAs, derived from heterochromatin and DNA repeats such as transposons) by cleaving small dsRNAs into 24 nucleotide ra-siRNAs. Plays a role in antiviral RNA silencing. Involved in the production of viral siRNAs derived from the cabbage leaf curl virus (CaLCuV) and tobacco rattle virus (TRV). Targeted by the viral silencing suppressor (VSR) protein 2b of the cucumber mosaic virus (CMV) that inactivates DCL3 function in RNA silencing. Acts redundantly with DICER-LIKE 1 (DCL1) to promote flowering via repression of FLOWERING LOCUS C (FLC). Does not seem to be involved in microRNAs (miRNAs) processing. In Arabidopsis thaliana (Mouse-ear cress), this protein is Endoribonuclease Dicer homolog 3 (DCL3).